Consider the following 290-residue polypeptide: MRGFVYVLVCVLALASFSRAQLPGGGGPVLPGGGPTIGPVNPDPTRTEVCAKFWVQEGNSCYLFDSGAFLRQVAASRPVVVNNENGLFQAAANMYCGQMHPNASLVTVNSLAENNFLYEWAVRMMVEPEPVWIGLHAGPMGQWQWYSGEPVTYTNWERMTAPMAEPGLGAMIFDADIIAQMFNNQVEITPQWVPEQAINDRHALICEYHPSGMTAAAAAATNAPTFPPMATAPPMAATTRGPVMFQNNPRNLVNSLTGGRFGGSLLHEIPRRQRMRPSNYRKNPYFGIQP.

The signal sequence occupies residues 1 to 20; that stretch reads MRGFVYVLVCVLALASFSRA. A C-type lectin domain is found at 92–162; the sequence is ANMYCGQMHP…YTNWERMTAP (71 aa). The N-linked (GlcNAc...) asparagine glycan is linked to Asn102.

In terms of tissue distribution, accumulates exclusively in mineralized tissues.

Matrix protein of the sea urchin embryo spicule. The function of the matrix proteins is to direct crystal growth in certain orientations and inhibit growth in others. This is 30 kDa spicule matrix protein alpha (SM30A) from Strongylocentrotus purpuratus (Purple sea urchin).